A 375-amino-acid chain; its full sequence is Succinyl-diaminopimelate desuccinylase (375 aa).

Position 66 (His-66) interacts with Zn(2+). The active site involves Asp-68. Residue Asp-99 coordinates Zn(2+). The Proton acceptor role is filled by Glu-133. Residues Glu-134, Glu-162, and His-348 each coordinate Zn(2+).

This sequence belongs to the peptidase M20A family. DapE subfamily. As to quaternary structure, homodimer. Requires Zn(2+) as cofactor. Co(2+) serves as cofactor.

It catalyses the reaction N-succinyl-(2S,6S)-2,6-diaminopimelate + H2O = (2S,6S)-2,6-diaminopimelate + succinate. Its pathway is amino-acid biosynthesis; L-lysine biosynthesis via DAP pathway; LL-2,6-diaminopimelate from (S)-tetrahydrodipicolinate (succinylase route): step 3/3. Functionally, catalyzes the hydrolysis of N-succinyl-L,L-diaminopimelic acid (SDAP), forming succinate and LL-2,6-diaminopimelate (DAP), an intermediate involved in the bacterial biosynthesis of lysine and meso-diaminopimelic acid, an essential component of bacterial cell walls. The chain is Succinyl-diaminopimelate desuccinylase from Cronobacter sakazakii (strain ATCC BAA-894) (Enterobacter sakazakii).